Here is a 366-residue protein sequence, read N- to C-terminus: 1-deoxy-D-xylulose 5-phosphate reductoisomerase (366 aa).

NADPH contacts are provided by T7, G8, S9, I10, G31, K32, N33, and N113. K114 contacts 1-deoxy-D-xylulose 5-phosphate. Position 115 (E115) interacts with NADPH. D133 is a Mn(2+) binding site. 4 residues coordinate 1-deoxy-D-xylulose 5-phosphate: S134, E135, S158, and H181. E135 lines the Mn(2+) pocket. G187 is a binding site for NADPH. Positions 194, 199, 200, and 203 each coordinate 1-deoxy-D-xylulose 5-phosphate. A Mn(2+)-binding site is contributed by E203.

Belongs to the DXR family. Mg(2+) is required as a cofactor. Mn(2+) serves as cofactor.

It catalyses the reaction 2-C-methyl-D-erythritol 4-phosphate + NADP(+) = 1-deoxy-D-xylulose 5-phosphate + NADPH + H(+). It participates in isoprenoid biosynthesis; isopentenyl diphosphate biosynthesis via DXP pathway; isopentenyl diphosphate from 1-deoxy-D-xylulose 5-phosphate: step 1/6. In terms of biological role, catalyzes the NADPH-dependent rearrangement and reduction of 1-deoxy-D-xylulose-5-phosphate (DXP) to 2-C-methyl-D-erythritol 4-phosphate (MEP). The polypeptide is 1-deoxy-D-xylulose 5-phosphate reductoisomerase (Helicobacter pylori (strain G27)).